The following is a 144-amino-acid chain: Maximins 1/H12 (144 aa).

An N-terminal signal peptide occupies residues 1 to 18; that stretch reads MNFKYIVAVSFLIASAYA. Positions 19–43 are excised as a propeptide; that stretch reads RSEENDEQSLSQRDVLEEESLREIR. Residue Asn70 is modified to Asparagine amide. The propeptide occupies 74–123; it reads TAEEHEVMKRLEVVMRDLDSLDYPEEASERETRDFNQEEIANLYTKKEKR. The residue at position 143 (Ile143) is an Isoleucine amide.

The protein belongs to the bombinin family. Expressed by the skin glands.

It localises to the secreted. Its function is as follows. Maximin-1 shows antibacterial activity against both Gram-positive and Gram-negative bacteria. It also shows antimicrobial activity against the fungus C.albicans, but not against A.flavus nor P.uticale. It has little hemolytic activity. It possess a significant cytotoxicity against tumor cell lines. It does not possess a significant anti-HIV activity. It shows high spermicidal activity. Functionally, maximin-H12 shows antimicrobial activity against bacteria and against the fungus C.albicans. Shows strong hemolytic activity. The sequence is that of Maximins 1/H12 from Bombina maxima (Giant fire-bellied toad).